The sequence spans 249 residues: 5'-nucleotidase SurE (249 aa).

D8, D9, S39, and N91 together coordinate a divalent metal cation.

The protein belongs to the SurE nucleotidase family. Requires a divalent metal cation as cofactor.

It localises to the cytoplasm. The enzyme catalyses a ribonucleoside 5'-phosphate + H2O = a ribonucleoside + phosphate. Nucleotidase that shows phosphatase activity on nucleoside 5'-monophosphates. The chain is 5'-nucleotidase SurE from Vesicomyosocius okutanii subsp. Calyptogena okutanii (strain HA).